Here is a 319-residue protein sequence, read N- to C-terminus: Acetyl-coenzyme A carboxylase carboxyl transferase subunit alpha (319 aa).

The CoA carboxyltransferase C-terminal domain maps to 32 to 293; that stretch reads NVDTEVRALE…KAVLLNELEA (262 aa).

This sequence belongs to the AccA family. Acetyl-CoA carboxylase is a heterohexamer composed of biotin carboxyl carrier protein (AccB), biotin carboxylase (AccC) and two subunits each of ACCase subunit alpha (AccA) and ACCase subunit beta (AccD).

The protein resides in the cytoplasm. The enzyme catalyses N(6)-carboxybiotinyl-L-lysyl-[protein] + acetyl-CoA = N(6)-biotinyl-L-lysyl-[protein] + malonyl-CoA. It functions in the pathway lipid metabolism; malonyl-CoA biosynthesis; malonyl-CoA from acetyl-CoA: step 1/1. Component of the acetyl coenzyme A carboxylase (ACC) complex. First, biotin carboxylase catalyzes the carboxylation of biotin on its carrier protein (BCCP) and then the CO(2) group is transferred by the carboxyltransferase to acetyl-CoA to form malonyl-CoA. The chain is Acetyl-coenzyme A carboxylase carboxyl transferase subunit alpha from Xylella fastidiosa (strain M12).